A 977-amino-acid polypeptide reads, in one-letter code: Disks large-associated protein 3 (977 aa).

Residues 1-10 (MRGYHGDRGS) show a composition bias toward basic and acidic residues. Disordered regions lie at residues 1-24 (MRGY…QHMD), 52-96 (AGLG…MYPG), 137-167 (FHTL…ESPS), 181-289 (AKSH…CLDA), 398-417 (AMGD…SPKA), and 529-582 (PGSS…SADG). Positions 53–73 (GLGHLSPEGPLSLSEGPSSVG) are enriched in low complexity. S58 bears the Phosphoserine mark. The span at 74 to 87 (PEGGPGGVGAGGGS) shows a compositional bias: gly residues. The span at 189-201 (PGKRDYNGPKADG) shows a compositional bias: basic and acidic residues. Over residues 221–245 (SHHHHHHHHHHHHQSRHGKRSKSKD) the composition is skewed to basic residues. Over residues 258–271 (GWWSSDDNLDSDSG) the composition is skewed to low complexity. Residues S404, S407, S410, and S414 each carry the phosphoserine modification. A compositionally biased stretch (pro residues) spans 538–547 (APPPIPPGSQ). 2 positions are modified to phosphoserine: S641 and S643. Disordered regions lie at residues 739-788 (EGYP…RTSP) and 906-939 (EEKK…RQRQ). 2 stretches are compositionally biased toward basic and acidic residues: residues 767 to 777 (GRRDSWMERGS) and 925 to 939 (PVKE…RQRQ). S930, S933, and S965 each carry phosphoserine.

This sequence belongs to the SAPAP family. As to quaternary structure, interacts with DLG4/PSD-95. Highly expressed in central and peripherical nervous system (at protein level).

The protein resides in the cell membrane. It localises to the postsynaptic density. The protein localises to the synapse. May play a role in the molecular organization of synapses and neuronal cell signaling. Could be an adapter protein linking ion channel to the subsynaptic cytoskeleton. May induce enrichment of PSD-95/SAP90 at the plasma membrane. The protein is Disks large-associated protein 3 (Dlgap3) of Mus musculus (Mouse).